A 59-amino-acid chain; its full sequence is Flagellar basal-body rod protein FlgC (59 aa).

This sequence belongs to the flagella basal body rod proteins family. As to quaternary structure, the basal body constitutes a major portion of the flagellar organelle and consists of four rings (L,P,S, and M) mounted on a central rod. The rod consists of about 26 subunits of FlgG in the distal portion, and FlgB, FlgC and FlgF are thought to build up the proximal portion of the rod with about 6 subunits each.

It localises to the bacterial flagellum basal body. This chain is Flagellar basal-body rod protein FlgC (flgC), found in Borrelia hermsii.